Consider the following 190-residue polypeptide: Hypoxanthine/guanine phosphoribosyltransferase (190 aa).

Belongs to the purine/pyrimidine phosphoribosyltransferase family. Archaeal HPRT subfamily. As to quaternary structure, homodimer.

It localises to the cytoplasm. The enzyme catalyses IMP + diphosphate = hypoxanthine + 5-phospho-alpha-D-ribose 1-diphosphate. It catalyses the reaction GMP + diphosphate = guanine + 5-phospho-alpha-D-ribose 1-diphosphate. It functions in the pathway purine metabolism; IMP biosynthesis via salvage pathway; IMP from hypoxanthine: step 1/1. In terms of biological role, catalyzes a salvage reaction resulting in the formation of IMP that is energically less costly than de novo synthesis. This Methanohalophilus mahii (strain ATCC 35705 / DSM 5219 / SLP) protein is Hypoxanthine/guanine phosphoribosyltransferase.